A 247-amino-acid polypeptide reads, in one-letter code: Probable transcriptional regulatory protein YPO2055/y2255/YP_1898 (247 aa).

It belongs to the TACO1 family.

Its subcellular location is the cytoplasm. The polypeptide is Probable transcriptional regulatory protein YPO2055/y2255/YP_1898 (Yersinia pestis).